The chain runs to 671 residues: Autophagy-related protein 22-2 (671 aa).

2 stretches are compositionally biased toward polar residues: residues Met-1–Gln-10 and Pro-19–Phe-34. The disordered stretch occupies residues Met-1–Glu-67. Asn-5 and Asn-21 each carry an N-linked (GlcNAc...) asparagine glycan. Over residues Glu-39–Val-60 the composition is skewed to basic and acidic residues. 4 helical membrane-spanning segments follow: residues Tyr-83–Leu-103, Ser-155–Ile-175, Leu-188–Pro-208, and Leu-212–Leu-232. The interval Pro-251–Leu-271 is disordered. Residues Ile-324 to Leu-344 traverse the membrane as a helical segment. Asn-346 carries an N-linked (GlcNAc...) asparagine glycan. Transmembrane regions (helical) follow at residues Leu-354–Leu-374, Phe-422–Val-442, Gly-457–Ile-477, Ala-491–Val-511, Trp-523–Cys-543, Tyr-560–Val-582, and Ala-591–Val-611. Residues Glu-634–Ile-671 form a disordered region.

This sequence belongs to the ATG22 family.

The protein localises to the vacuole membrane. In terms of biological role, vacuolar effluxer which mediate the efflux of amino acids resulting from autophagic degradation. The release of autophagic amino acids allows the maintenance of protein synthesis and viability during nitrogen starvation. The sequence is that of Autophagy-related protein 22-2 (atg22-2) from Sclerotinia sclerotiorum (strain ATCC 18683 / 1980 / Ss-1) (White mold).